Reading from the N-terminus, the 173-residue chain is Pyrimidine operon regulatory protein (173 aa).

Residues Thr40–Arg41, Asp97–Thr105, and Arg130 contribute to the substrate site. The short motif at Val93–Thr105 is the PRPP-binding element.

This sequence belongs to the purine/pyrimidine phosphoribosyltransferase family. PyrR subfamily.

Functionally, regulates transcriptional attenuation of the pyrimidine nucleotide (pyr) operon in response to exogenous pyrimidines, probably by binding to specific sites on pyr mRNA. This probably disrupts an antiterminator hairpin in the RNA and favors formation of a downstream transcription terminator, leading to a reduced expression of downstream genes. This chain is Pyrimidine operon regulatory protein, found in Lactococcus lactis subsp. lactis (strain IL1403) (Streptococcus lactis).